We begin with the raw amino-acid sequence, 270 residues long: MATHTSKRRIHRWENNELSEENSTIIYFPARGLMWTHFPFVLGICLEFVGYVLKIVFINSPSISTFIAQSVLLLIAPSLYALSIFMLFSKMARLILMEAYMLIPAKFSTVSFVVADMIGRVLQAVGGGLLSSWNSRNTGRILIIVGLFIQIFCYTFLTFSQLFLHYKMKATPSKIVRDSNEWFQYNFILLAGILLVNGRTIVRVVQFLMGLQSYIGQHEWCLYVFDTVLMFLLPLIFLATFRARNLFKLQDKSVNIQLNKLLDKESVSED.

At 1-37 (MATHTSKRRIHRWENNELSEENSTIIYFPARGLMWTH) the chain is on the cytoplasmic side. A helical membrane pass occupies residues 38–58 (FPFVLGICLEFVGYVLKIVFI). Over 59–65 (NSPSIST) the chain is Extracellular. The helical transmembrane segment at 66-86 (FIAQSVLLLIAPSLYALSIFM) threads the bilayer. Residues 87-93 (LFSKMAR) lie on the Cytoplasmic side of the membrane. Residues 94 to 114 (LILMEAYMLIPAKFSTVSFVV) traverse the membrane as a helical segment. Topologically, residues 115–140 (ADMIGRVLQAVGGGLLSSWNSRNTGR) are extracellular. The chain crosses the membrane as a helical span at residues 141 to 161 (ILIIVGLFIQIFCYTFLTFSQ). The Cytoplasmic segment spans residues 162 to 181 (LFLHYKMKATPSKIVRDSNE). The chain crosses the membrane as a helical span at residues 182–202 (WFQYNFILLAGILLVNGRTIV). Residues 203–220 (RVVQFLMGLQSYIGQHEW) lie on the Extracellular side of the membrane. Residues 221 to 241 (CLYVFDTVLMFLLPLIFLATF) traverse the membrane as a helical segment. Residues 242-270 (RARNLFKLQDKSVNIQLNKLLDKESVSED) are Cytoplasmic-facing.

This sequence belongs to the lipid-translocating exporter (LTE) (TC 9.A.26.1) family.

The protein localises to the membrane. This is an uncharacterized protein from Saccharomyces cerevisiae (strain ATCC 204508 / S288c) (Baker's yeast).